The following is a 592-amino-acid chain: Polyadenylate-binding protein, cytoplasmic and nuclear (592 aa).

A compositionally biased stretch (basic and acidic residues) spans 1 to 10 (MSDITEKTAE). A disordered region spans residues 1–43 (MSDITEKTAEQLENLQINDDQQPAQSASAPSTSASESEASSVS). Polar residues predominate over residues 11-20 (QLENLQINDD). Low complexity predominate over residues 21 to 43 (QQPAQSASAPSTSASESEASSVS). RRM domains are found at residues 50–128 (ASLY…WSER), 138–215 (GNIF…MHVP), 231–308 (TNIY…RAQK), and 334–411 (VNLF…IAQR). In terms of domain architecture, PABC spans 507–586 (NQFPRHQQQH…ALAAYENFKK (80 aa)).

This sequence belongs to the polyadenylate-binding protein type-1 family.

Its subcellular location is the cytoplasm. The protein localises to the nucleus. Functionally, binds the poly(A) tail of mRNA. Appears to be an important mediator of the multiple roles of the poly(A) tail in mRNA biogenesis, stability and translation. In the nucleus, involved in both mRNA cleavage and polyadenylation. Is also required for efficient mRNA export to the cytoplasm. Acts in concert with a poly(A)-specific nuclease (PAN) to affect poly(A) tail shortening, which may occur concomitantly with either nucleocytoplasmic mRNA transport or translational initiation. In the cytoplasm, stimulates translation initiation and regulates mRNA decay through translation termination-coupled poly(A) shortening, probably mediated by PAN. The protein is Polyadenylate-binding protein, cytoplasmic and nuclear (PAB1) of Kluyveromyces lactis (strain ATCC 8585 / CBS 2359 / DSM 70799 / NBRC 1267 / NRRL Y-1140 / WM37) (Yeast).